The following is a 512-amino-acid chain: Probable cytosol aminopeptidase (512 aa).

Mn(2+) contacts are provided by Lys281 and Asp286. Lys293 is a catalytic residue. Residues Asp304, Asp363, and Glu365 each contribute to the Mn(2+) site. Arg367 is an active-site residue.

This sequence belongs to the peptidase M17 family. It depends on Mn(2+) as a cofactor.

Its subcellular location is the cytoplasm. It carries out the reaction Release of an N-terminal amino acid, Xaa-|-Yaa-, in which Xaa is preferably Leu, but may be other amino acids including Pro although not Arg or Lys, and Yaa may be Pro. Amino acid amides and methyl esters are also readily hydrolyzed, but rates on arylamides are exceedingly low.. The catalysed reaction is Release of an N-terminal amino acid, preferentially leucine, but not glutamic or aspartic acids.. In terms of biological role, presumably involved in the processing and regular turnover of intracellular proteins. Catalyzes the removal of unsubstituted N-terminal amino acids from various peptides. The sequence is that of Probable cytosol aminopeptidase from Koribacter versatilis (strain Ellin345).